Consider the following 406-residue polypeptide: MSHFGDHVGIDPAIMKQYSEHHNGSHDNDDKDKEDKEKQNTEAVAAAAVQLDASLLASGILDDFEKAKKEEEEANGNNNASNDQQNASDRHVGDMLEQHSQQHQQSQEHDTSYINTYIEDKVPLTSVLIPGDRRVSDREASDRIAATTRRVRLRWTQEETADLMEGCKVHGVGNWKKILTDPRFRFNNRTAVDLKDRFRTCFPEDYRRLYPNARSRKFGKKTNVMAVNDDLVKVNRKERRVFTPEEDERLLNGFMKHGPSWSNIQRDNELGLFERRSTDLRDRFRNAFPLEYAAAGFKARGPKRRPVVEATHGNTLQTIFSASDGSEMSPRKYHRVQEQMDRQPVMRVHPQAPMDQGVDRDHMTQQFTQELQPQAHSRKQQGGDGLKEEVFAAAQNQSYNNYYYQK.

Residues 20–40 (EHHNGSHDNDDKDKEDKEKQN) are compositionally biased toward basic and acidic residues. The segment at 20–46 (EHHNGSHDNDDKDKEDKEKQNTEAVAA) is disordered. In terms of domain architecture, HTH myb-type spans 147-206 (TTRRVRLRWTQEETADLMEGCKVHGVGNWKKILTDPRFRFNNRTAVDLKDRFRTCFPEDY). The segment at residues 175–202 (WKKILTDPRFRFNNRTAVDLKDRFRTCF) is a DNA-binding region (H-T-H motif). The 55-residue stretch at 234–288 (VNRKERRVFTPEEDERLLNGFMKHGPSWSNIQRDNELGLFERRSTDLRDRFRNAF) folds into the Myb-like domain. Positions 368 to 389 (TQELQPQAHSRKQQGGDGLKEE) are disordered.

Its subcellular location is the nucleus. The protein resides in the chromosome. It localises to the telomere. Its function is as follows. Telomere-binding protein that mediates telomere clustering by promoting formation of head-to-head dimers of DNA molecules through the telomeric tracts. Binds specifically 5'-TTAGTCAGGG-3' repeats in subtelomeric regions. The polypeptide is telomere-associated protein 1 (Yarrowia lipolytica (strain CLIB 122 / E 150) (Yeast)).